The primary structure comprises 212 residues: MDPSGPGPSSAAAGGAPAVAAAPQPPAQLSRYESQKRRDWNTFLQYLRNHRPPLTLARCSGAHVIEFLRYLDQFGKTKVHASGCAFYGQPSPPGPCPCPLRQAWGSLDALIGRLRAAYEESGGTPESNPFAARAVRIYLREVRDSQAKARGIPYEKKKRKRSQAAQPAGVEPSGSSSAAAAAAGGGDAGSGGGAAATTTAQPGGSGTAPSAS.

Low complexity predominate over residues 1–22 (MDPSGPGPSSAAAGGAPAVAAA). Disordered regions lie at residues 1-34 (MDPS…RYES) and 148-212 (KARG…PSAS). Residues 31 to 158 (RYESQKRRDW…ARGIPYEKKK (128 aa)) form the ALOG domain. Positions 156–160 (KKKRK) match the Nuclear localization signal motif. Residues 167-182 (PAGVEPSGSSSAAAAA) show a composition bias toward low complexity. The segment covering 183–194 (AGGGDAGSGGGA) has biased composition (gly residues). The segment covering 195-212 (AATTTAQPGGSGTAPSAS) has biased composition (low complexity).

This sequence belongs to the plant homeotic and developmental regulators ALOG protein family.

The protein localises to the nucleus. Probable transcription regulator that acts as a developmental regulator by promoting cell growth in response to light. The chain is Protein G1-like7 (G1L7) from Oryza sativa subsp. japonica (Rice).